The following is a 214-amino-acid chain: MGRRPARCYRYCKNKPYPKSRFCRGVPDAKIRIFDLGRKKAKVDEFPLGGHMVSDEYEQLSSEALEAARICANKYMVKSCGRDGFHMRVRLHPFHVIRINKMLSCAGADRLQTGMRGAFGKPQGTVARVHIGQVIMSIRTKLQNEEHVIEALRRAKFKFPGRQKIHISKKWGFTKFNADEFEDMVAKKCLIPDGCGVKYVPSHGPLDKWRVLHS.

This sequence belongs to the universal ribosomal protein uL16 family. In terms of assembly, component of a male germ cell-specific 60S large ribosomal subunit (LSU), which contains RPL10L and RPL39L, instead of RPL10 and RPL39 paralogs. The composition of the rest of the complex is similar to classical ribosomes. As to expression, almost testis-specific. Also expressed in pre- and postmenopausal ovary.

It localises to the cytoplasm. Testis-specific component of the ribosome, which is required for the transition from prophase to metaphase in male meiosis I. Compensates for the inactivated X-linked RPL10 paralog during spermatogenesis. The ribosome is a large ribonucleoprotein complex responsible for the synthesis of proteins in the cell. The male germ cell-specific ribosome displays a ribosomal polypeptide exit tunnel of distinct size and charge states compared with the classical ribosome. It is responsible for regulating the biosynthesis and folding of a subset of male germ-cell-specific proteins that are essential for the formation of sperm. The chain is Ribosomal protein uL16-like from Homo sapiens (Human).